The primary structure comprises 296 residues: MSLLANRRFLKMHGAGNAIVVLDLRGTAVRVTPAEARAIAADVHSRFDQLMVVHDPVTPGTDAFMRIYNTDGSESGACGNGTRCVGYALLDDPAMARPAENGALTLETKAGLVAVKRITERSFTVDMGQPRLRWDEIPLAEPFLDTRRIELQVGPIDDPILHSPAAVSMGNPHAIFFVERDPDSYDLGRIGPLLEAHPIFPERANISIAEVTGRDTIKLRVWERGAGLTLACGTAACATVVAASRLRMIGRAARVALPGGELSIEWRADDHVLMTGPVYLEGEGTFSPDLFAGIDG.

Substrate-binding residues include Asn17, Gln49, and Asn69. Cys78 (proton donor) is an active-site residue. Substrate is bound by residues 79-80 (GN), Asn171, Asn205, and 223-224 (ER). Cys232 functions as the Proton acceptor in the catalytic mechanism. 233-234 (GT) contacts substrate.

It belongs to the diaminopimelate epimerase family. In terms of assembly, homodimer.

It localises to the cytoplasm. It catalyses the reaction (2S,6S)-2,6-diaminopimelate = meso-2,6-diaminopimelate. The protein operates within amino-acid biosynthesis; L-lysine biosynthesis via DAP pathway; DL-2,6-diaminopimelate from LL-2,6-diaminopimelate: step 1/1. Functionally, catalyzes the stereoinversion of LL-2,6-diaminopimelate (L,L-DAP) to meso-diaminopimelate (meso-DAP), a precursor of L-lysine and an essential component of the bacterial peptidoglycan. This is Diaminopimelate epimerase from Methylorubrum extorquens (strain PA1) (Methylobacterium extorquens).